We begin with the raw amino-acid sequence, 417 residues long: MSLSNKLTLDKLDVKGKRVVMRVDFNVPMKNNQITNNQRIKAAIPSIKFCLDNGAKSVVLMSHLGRPDGIPMPDKYSLEPVAVELKSLPGKDVLFLKDCVGPEVEKACADPAAGSVILLENLRFHVEEEGKGKDASGSKVKADPAKIEAFRASLSKLGDVYVNDAFGTAHRAHSSMVGVNLPKKAGGFLMKKELNYFAKALESPERPFLAILGGAKVADKIQLINNMLDKVNEMIIGGGMAFTFLKVLNNMEIGTSLFDEEGSKIVKDLMSKAEKNGVKITLPVDFVTADKFDENAKIGQATVASGIPAGWMGLDCGPESSKKYSEAVARAKQIVWNGPVGVFEWEAFAQGTKALMDEVVKATSRGCITIIGGGDTATCCAKWNTEDKVSHVSTGGGASLELLEGKVLPGVDALSNV.

At serine 2 the chain carries N-acetylserine. Phosphoserine occurs at positions 2 and 4. The residue at position 6 (lysine 6) is an N6-succinyllysine. An N6-acetyllysine modification is found at lysine 11. 6 residues coordinate (2R)-3-phosphoglycerate: valine 23, aspartate 24, phenylalanine 25, asparagine 26, glutamine 38, and arginine 39. Residues 38–43 form a mitochondrial targeting region exposed following cis-trans isomerization by PIN1 and recognized by the TOM complex for mitochondrial translocation of the protein region; it reads QRIKAA. Lysine 48 bears the N6-acetyllysine; alternate mark. Position 48 is an N6-succinyllysine; alternate (lysine 48). (2R)-3-phosphoglycerate is bound by residues serine 62, histidine 63, glycine 65, and arginine 66. Lysine 75 bears the N6-acetyllysine mark. Tyrosine 76 carries the phosphotyrosine modification. Residues lysine 86 and lysine 91 each carry the N6-acetyllysine modification. An N6-acetyllysine; alternate modification is found at lysine 97. An N6-(2-hydroxyisobutyryl)lysine; alternate modification is found at lysine 97. Residues leucine 122 and arginine 123 each coordinate (2R)-3-phosphoglycerate. At lysine 131 the chain carries N6-acetyllysine; alternate. The residue at position 131 (lysine 131) is an N6-malonyllysine; alternate. Residue lysine 146 is modified to N6-acetyllysine. Histidine 170 and arginine 171 together coordinate (2R)-3-phosphoglycerate. Lysine 191 is subject to N6-succinyllysine. Residue tyrosine 196 is modified to Phosphotyrosine. Lysine 199 carries the N6-acetyllysine modification. The residue at position 203 (serine 203) is a Phosphoserine. Glycine 214 is a binding site for ADP. Position 214 (glycine 214) interacts with CDP. Alanine 215 and lysine 216 together coordinate AMP. Alanine 215 serves as a coordination point for ATP. Alanine 215 provides a ligand contact to Mg(2+). An N6-(2-hydroxyisobutyryl)lysine modification is found at lysine 216. Mg(2+) is bound by residues alanine 218 and aspartate 219. Aspartate 219 provides a ligand contact to CDP. Lysine 220 is an AMP binding site. Residue lysine 220 participates in ATP binding. Lysine 220 carries the post-translational modification N6-(2-hydroxyisobutyryl)lysine. Glycine 238 contacts ADP. Residue glycine 238 participates in CDP binding. Position 239 (glycine 239) interacts with AMP. Glycine 239 contacts ATP. N6-acetyllysine occurs at positions 267 and 291. An AMP-binding site is contributed by glycine 313. An ATP-binding site is contributed by glycine 313. Position 323 is an N6-(2-hydroxyisobutyryl)lysine (lysine 323). CDP is bound by residues glycine 338, valine 340, and phenylalanine 343. Phenylalanine 343 contacts ADP. Glutamate 344 serves as a coordination point for AMP. Residue glutamate 344 participates in ATP binding. Lysine 361 is subject to N6-acetyllysine. ATP is bound by residues aspartate 375 and threonine 376. Aspartate 375 is a binding site for Mg(2+).

This sequence belongs to the phosphoglycerate kinase family. As to quaternary structure, monomer. Interacts with kinase MAPK1/ERK2; the interaction is direct, occurs under hypoxic conditions, and promotes its interaction with PIN1. Interacts with peptidyl-prolyl cis-trans isomerase PIN1; the interaction is direct, occurs under hypoxic conditions, and targets the protein to the mitochondrion by promoting interactions with the TOM complex. Interacts with mitochondrial circRNA mcPGK1 (via its 2nd stem-loop); the interaction is direct and targets the protein to the mitochondrion by promoting interactions with the TOM complex. Interacts with pyruvate dehydrogenase kinase PDK1; the interaction is direct, occurs under hypoxic conditions and leads to PDK1-mediated inhibition of pyruvate dehydrogenase complex activity. Requires Mg(2+) as cofactor. Phosphorylated at Ser-203 by MAPK1/ERK2 under hypoxic conditions, which promotes its mitochondrial targeting.

It is found in the cytoplasm. It localises to the cytosol. The protein resides in the mitochondrion matrix. It catalyses the reaction (2R)-3-phosphoglycerate + ATP = (2R)-3-phospho-glyceroyl phosphate + ADP. The enzyme catalyses L-seryl-[protein] + ATP = O-phospho-L-seryl-[protein] + ADP + H(+). Its pathway is carbohydrate degradation; glycolysis; pyruvate from D-glyceraldehyde 3-phosphate: step 2/5. In terms of biological role, catalyzes one of the two ATP producing reactions in the glycolytic pathway via the reversible conversion of 1,3-diphosphoglycerate to 3-phosphoglycerate. Both L- and D- forms of purine and pyrimidine nucleotides can be used as substrates, but the activity is much lower on pyrimidines. In addition to its role as a glycolytic enzyme, it seems that PGK-1 acts as a polymerase alpha cofactor protein (primer recognition protein). Acts as a protein kinase when localized to the mitochondrion where it phosphorylates pyruvate dehydrogenase kinase PDK1 to inhibit pyruvate dehydrogenase complex activity and suppress the formation of acetyl-coenzyme A from pyruvate, and consequently inhibit oxidative phosphorylation and promote glycolysis. May play a role in sperm motility. This Sus scrofa (Pig) protein is Phosphoglycerate kinase 1 (PGK1).